A 74-amino-acid polypeptide reads, in one-letter code: Small ribosomal subunit protein eS17 (74 aa).

This sequence belongs to the eukaryotic ribosomal protein eS17 family.

This is Small ribosomal subunit protein eS17 from Aeropyrum pernix (strain ATCC 700893 / DSM 11879 / JCM 9820 / NBRC 100138 / K1).